We begin with the raw amino-acid sequence, 81 residues long: Small serum protein 4 (81 aa).

Positions 1–19 are cleaved as a signal peptide; that stretch reads MKVFFILIIFSFTLATCQG. 3 disulfides stabilise this stretch: Cys21-Cys74, Cys41-Cys66, and Cys64-Cys73.

This sequence belongs to the beta-microseminoprotein family.

Its subcellular location is the secreted. Functionally, shows an slight inhibitory effect toward the metalloproteinase brevilysin H6, but does not inhibit the metalloproteinases thermolysin, HR1A and HR1B. The chain is Small serum protein 4 from Protobothrops flavoviridis (Habu).